The chain runs to 1135 residues: Exportin-5 (1135 aa).

Residues 32–117 form the Importin N-terminal domain; that stretch reads SQVFLEEIKT…KEKLVTILVD (86 aa). The tract at residues 630–631 is pre-siRNA binding; it reads TE.

This sequence belongs to the exportin family. In terms of assembly, found in a nuclear export complex with RanGTP, exportin and pre-miRNA.

The protein resides in the nucleus. The protein localises to the cytoplasm. Functionally, mediates the nuclear export of proteins bearing a double-stranded RNA binding domain (dsRBD) and double-stranded RNAs (cargos). Mediates the nuclear export of micro-RNA precursors, which form short hairpins. This Dictyostelium discoideum (Social amoeba) protein is Exportin-5 (xpo5).